Reading from the N-terminus, the 186-residue chain is Elongation factor P (186 aa).

Belongs to the elongation factor P family.

Its subcellular location is the cytoplasm. It participates in protein biosynthesis; polypeptide chain elongation. Its function is as follows. Involved in peptide bond synthesis. Stimulates efficient translation and peptide-bond synthesis on native or reconstituted 70S ribosomes in vitro. Probably functions indirectly by altering the affinity of the ribosome for aminoacyl-tRNA, thus increasing their reactivity as acceptors for peptidyl transferase. The chain is Elongation factor P from Clostridium acetobutylicum (strain ATCC 824 / DSM 792 / JCM 1419 / IAM 19013 / LMG 5710 / NBRC 13948 / NRRL B-527 / VKM B-1787 / 2291 / W).